The sequence spans 276 residues: Type II pantothenate kinase (276 aa).

8–15 lines the ATP pocket; sequence DAGGTLTK. The Proton acceptor role is filled by glutamate 76. ATP is bound by residues threonine 105, 127 to 131, phenylalanine 143, and serine 230; that span reads GGTIM.

It belongs to the type II pantothenate kinase family. Homodimer.

It is found in the cytoplasm. The enzyme catalyses (R)-pantothenate + ATP = (R)-4'-phosphopantothenate + ADP + H(+). It participates in cofactor biosynthesis; coenzyme A biosynthesis; CoA from (R)-pantothenate: step 1/5. In terms of biological role, catalyzes the phosphorylation of pantothenate (Pan), the first step in CoA biosynthesis. This chain is Type II pantothenate kinase, found in Bacillus anthracis.